Reading from the N-terminus, the 520-residue chain is Mitogen-activated protein kinase kinase 3 (520 aa).

Ser-69 is modified (phosphoserine). The Protein kinase domain occupies 83–339; the sequence is MRVFGAIGSG…ADQLLSHPFI (257 aa). ATP is bound by residues 89–97 and Lys-112; that span reads IGSGASSVV. Residue Asp-207 is the Proton acceptor of the active site. Ser-235 carries the post-translational modification Phosphoserine. 2 positions are modified to phosphothreonine: Thr-241 and Thr-245. The NTF2 domain maps to 366–516; that stretch reads LADMLTIHYY…YFLAKQELYI (151 aa).

The protein belongs to the protein kinase superfamily. STE Ser/Thr protein kinase family. MAP kinase kinase subfamily. In terms of assembly, interacts with MPK1, MPK2 and MPK7. Interacts with P.syringae type III effector HopF2. Interacts with MPK14. Binds to MAPKKK17 and MAPKKK18. Binds to MAPKKK20. In terms of processing, phosphorylation at Ser-235 and Thr-241 by MAP kinase kinase kinases positively regulates kinase activity. Phosphorylated by MAPKKK20. As to expression, mostly expressed in leaves, and, to a lower extent, in roots, seedlings, flower buds, flowers and siliques.

The protein localises to the nucleus. It is found in the cytoplasm. It catalyses the reaction L-seryl-[protein] + ATP = O-phospho-L-seryl-[protein] + ADP + H(+). The enzyme catalyses L-threonyl-[protein] + ATP = O-phospho-L-threonyl-[protein] + ADP + H(+). The catalysed reaction is L-tyrosyl-[protein] + ATP = O-phospho-L-tyrosyl-[protein] + ADP + H(+). Functionally, MKK3-MPK6 module plays an important role in the jasmonate signal transduction pathway through the negative regulation of MYC2/JIN1 expression. Activates by phosphorylation the downstream MPK6, MPK7 and MPK8. MKK3-MPK7 module acts as a positive regulator of PR1 gene expression. MKK3-MPK8 module negatively regulates ROS accumulation through controlling expression of the RBOHD gene. Component of the abscisic acid (ABA) signaling pathway that may act as ABA signal transducer in the context of abiotic stresses. Activator of the C group MAP kinases. Activates MPK7 in response to ABA. Mitogen-activated protein kinase (MAPK) that is specifically regulated by MAPKKK20 and mediates signaling that regulates cortical microtubule functions. This chain is Mitogen-activated protein kinase kinase 3, found in Arabidopsis thaliana (Mouse-ear cress).